The primary structure comprises 352 residues: Alanine racemase (352 aa).

The active-site Proton acceptor; specific for D-alanine is Lys34. Lys34 bears the N6-(pyridoxal phosphate)lysine mark. Residue Arg126 participates in substrate binding. The active-site Proton acceptor; specific for L-alanine is Tyr248. Met296 is a substrate binding site.

Belongs to the alanine racemase family. Pyridoxal 5'-phosphate is required as a cofactor.

It carries out the reaction L-alanine = D-alanine. The protein operates within amino-acid biosynthesis; D-alanine biosynthesis; D-alanine from L-alanine: step 1/1. In terms of biological role, catalyzes the interconversion of L-alanine and D-alanine. May also act on other amino acids. This Deinococcus deserti (strain DSM 17065 / CIP 109153 / LMG 22923 / VCD115) protein is Alanine racemase (alr).